The following is a 467-amino-acid chain: Cysteine protease ATG4a (467 aa).

The segment at 1–35 (MKALCDRFVPQQCSSSSKSDTHDKSPLVSDSGPSD) is disordered. The Nucleophile role is filled by C170. Residues D364 and H366 contribute to the active site. Positions 448 to 467 (NYGFADDDSEDEREDDWQML) are disordered. Positions 452 to 467 (ADDDSEDEREDDWQML) are enriched in acidic residues.

This sequence belongs to the peptidase C54 family. Interacts with ATG8. In terms of tissue distribution, constitutively expressed.

The protein localises to the cytoplasm. The catalysed reaction is [protein]-C-terminal L-amino acid-glycyl-phosphatidylethanolamide + H2O = [protein]-C-terminal L-amino acid-glycine + a 1,2-diacyl-sn-glycero-3-phosphoethanolamine. Functionally, cysteine protease that plays a key role in autophagy by mediating both proteolytic activation and delipidation of ATG8 family proteins. The protease activity is required for proteolytic activation of ATG8 family proteins: cleaves the C-terminal amino acid of ATG8 proteins to reveal a C-terminal glycine. Exposure of the glycine at the C-terminus is essential for ATG8 proteins conjugation to phosphatidylethanolamine (PE) and insertion to membranes, which is necessary for autophagy. In addition to the protease activity, also mediates delipidation of PE-conjugated ATG8 proteins. The polypeptide is Cysteine protease ATG4a (Arabidopsis thaliana (Mouse-ear cress)).